The sequence spans 562 residues: F-box only protein 33 (562 aa).

An F-box domain is found at 68–114 (AAGAASLPSELIVHIFSFLPAPDRLRASASCSHWRECLFYPALWPQL). A compositionally biased stretch (gly residues) spans 155–173 (GGGPGDGGSGGGTDTGTGG). Residues 155–176 (GGGPGDGGSGGGTDTGTGGEDG) are disordered.

Part of the SCF (SKP1-CUL1-F-box) E3 ubiquitin-protein ligase complex SCF(FBXO33) formed of CUL1, SKP1, RBX1 and FBXO33. Interacts via its N-terminus with YBX1 CSD domain. Directly interacts with SKP1 and CUL1.

The protein operates within protein modification; protein ubiquitination. Its function is as follows. Substrate recognition component of a SCF (SKP1-CUL1-F-box protein) E3 ubiquitin-protein ligase complex which mediates the ubiquitination and subsequent proteasomal degradation of target proteins. Probably recognizes and binds to phosphorylated target proteins. Recognizes YBX1. The polypeptide is F-box only protein 33 (Fbxo33) (Mus musculus (Mouse)).